Reading from the N-terminus, the 426-residue chain is Phosphoribosylamine--glycine ligase (426 aa).

An ATP-grasp domain is found at 113 to 320 (KSLMTEAKIP…LLELLYRAST (208 aa)). 139–200 (LESKSIPIVI…EEFMEGQEAS (62 aa)) is an ATP binding site. Mg(2+) is bound by residues E290 and N292.

The protein belongs to the GARS family. It depends on Mg(2+) as a cofactor. The cofactor is Mn(2+).

The enzyme catalyses 5-phospho-beta-D-ribosylamine + glycine + ATP = N(1)-(5-phospho-beta-D-ribosyl)glycinamide + ADP + phosphate + H(+). Its pathway is purine metabolism; IMP biosynthesis via de novo pathway; N(1)-(5-phospho-D-ribosyl)glycinamide from 5-phospho-alpha-D-ribose 1-diphosphate: step 2/2. This Leptospira interrogans serogroup Icterohaemorrhagiae serovar Lai (strain 56601) protein is Phosphoribosylamine--glycine ligase.